Reading from the N-terminus, the 257-residue chain is Tryptophan synthase alpha chain (257 aa).

Residues E47 and D58 each act as proton acceptor in the active site.

Belongs to the TrpA family. Tetramer of two alpha and two beta chains.

It catalyses the reaction (1S,2R)-1-C-(indol-3-yl)glycerol 3-phosphate + L-serine = D-glyceraldehyde 3-phosphate + L-tryptophan + H2O. The protein operates within amino-acid biosynthesis; L-tryptophan biosynthesis; L-tryptophan from chorismate: step 5/5. The alpha subunit is responsible for the aldol cleavage of indoleglycerol phosphate to indole and glyceraldehyde 3-phosphate. The protein is Tryptophan synthase alpha chain of Listeria monocytogenes serotype 4b (strain F2365).